Consider the following 134-residue polypeptide: Protein NrdI (134 aa).

The protein belongs to the NrdI family.

In terms of biological role, probably involved in ribonucleotide reductase function. The sequence is that of Protein NrdI from Chromohalobacter salexigens (strain ATCC BAA-138 / DSM 3043 / CIP 106854 / NCIMB 13768 / 1H11).